The chain runs to 107 residues: Small ribosomal subunit protein uS17 (107 aa).

Belongs to the universal ribosomal protein uS17 family. As to quaternary structure, part of the 30S ribosomal subunit.

In terms of biological role, one of the primary rRNA binding proteins, it binds specifically to the 5'-end of 16S ribosomal RNA. In Aquifex aeolicus (strain VF5), this protein is Small ribosomal subunit protein uS17.